A 710-amino-acid polypeptide reads, in one-letter code: MDINLIKQYINSSLPNDKESLIQYYGQLKQILNALSDKEQQQLLNNNGKISEQQQLSIENNYKVIGSIEEKMKSIEHLFNNLDVSDSNNNNSTSPVFISLDNQNTVNNNNNNNNNNNNNNNNNNNNNNNSLAPTVILDNNDNKKTAEIILPDHHNNTPQQQPEQQVQQQQVQQQQQVQQQQQQPEQQQQHLTEEQIQKQQQSQASIQQAIANMGEKKRSSSRHSGPPEIPPEEIKFDVKTDLLGGGAYGKVYKATCRGKKVAVKVPKKQTLSESELKSFKNEVEIMKQIFHPNVVLCLGACTKPGKVMIVSELMQTDLEKLIHSSEVEPPPLYERMKMCLDAALGINWLHGICNIIHRDLKLANLMISKDKTVKIGDFGFSQVIKTGTTLSDQKGPKGTALYMAPEVMMKHEFNEKADVYSFGLILYEMATCEELFPEYSEIDPFYDAICNKKLRPPIPDSFPKSLKTLIQKCWDHDPNKRPSFNEVTQRMNEVLTDTAISGLDAAMFWKYNFIKPESESVPWNEFVYKLSSVVNLPTQVLSPLAQLFVSQSYEEEIGGVVTMERFDLMNKWFGNFFNSKYGPAILYEMIELLKKRWFHFDISRDISEKRLRGRPENTFLLRLSANDPIKTPFTISKTKGSKPTHKRVSREDVQINEIKQFPMGYKFTVPLDGNELVFGSITQMVEELHRIGNLSIPCPITEIKVPYLTD.

3 stretches are compositionally biased toward low complexity: residues 83 to 94 (DVSDSNNNNSTS), 107 to 129 (NNNN…NNNN), and 197 to 208 (QKQQQSQASIQQ). 2 disordered regions span residues 83-136 (DVSD…PTVI) and 189-232 (QHLT…IPPE). One can recognise a Protein kinase domain in the interval 237 to 495 (DVKTDLLGGG…EVTQRMNEVL (259 aa)). ATP contacts are provided by residues 243–251 (LGGGAYGKV) and lysine 264. Aspartate 359 (proton acceptor) is an active-site residue. Positions 597-707 (WFHFDISRDI…CPITEIKVPY (111 aa)) constitute an SH2 domain.

It belongs to the protein kinase superfamily. Ser/Thr protein kinase family. SH2 domain-containing protein kinase subfamily.

Its subcellular location is the membrane. It carries out the reaction L-seryl-[protein] + ATP = O-phospho-L-seryl-[protein] + ADP + H(+). The enzyme catalyses L-threonyl-[protein] + ATP = O-phospho-L-threonyl-[protein] + ADP + H(+). Required for proper chemotaxis and phagocytosis; proper spatiotemporal control of F-actin levels in chemotaxing cells. Negative regulator of the PI3K (phosphatidylinositol 3 kinase) pathway. Predominantly phosphorylates serines and threonines and tyrosines at a lower level. The polypeptide is Dual specificity protein kinase shkE (shkE) (Dictyostelium discoideum (Social amoeba)).